Reading from the N-terminus, the 297-residue chain is 4-diphosphocytidyl-2-C-methyl-D-erythritol kinase (297 aa).

Lys19 is an active-site residue. 105 to 115 (PIASGIGGGSA) contacts ATP. The active site involves Asp147.

The protein belongs to the GHMP kinase family. IspE subfamily.

The catalysed reaction is 4-CDP-2-C-methyl-D-erythritol + ATP = 4-CDP-2-C-methyl-D-erythritol 2-phosphate + ADP + H(+). Its pathway is isoprenoid biosynthesis; isopentenyl diphosphate biosynthesis via DXP pathway; isopentenyl diphosphate from 1-deoxy-D-xylulose 5-phosphate: step 3/6. Functionally, catalyzes the phosphorylation of the position 2 hydroxy group of 4-diphosphocytidyl-2C-methyl-D-erythritol. The polypeptide is 4-diphosphocytidyl-2-C-methyl-D-erythritol kinase (Rhizobium etli (strain CIAT 652)).